The primary structure comprises 683 residues: Probable metal-nicotianamine transporter YSL3 (683 aa).

14 helical membrane-spanning segments follow: residues 29–49, 58–78, 97–117, 142–162, 204–224, 265–285, 309–329, 372–392, 404–424, 448–468, 490–510, 553–573, 595–615, and 628–648; these read LVTP…CFVG, IVPA…KWLI, MFLL…GFAT, HVPI…GVLI, VATI…QWFY, IVNF…YPFL, VFIS…TLIT, IPIP…TIAI, LAVL…ATGL, PGAV…LHIS, TGQI…FLAF, CMTF…VVLV, FFAG…LLAW, and SAVA…SALL.

The protein belongs to the YSL (TC 2.A.67.2) family.

It localises to the membrane. In terms of biological role, may be involved in the transport of nicotianamine-chelated metals. This chain is Probable metal-nicotianamine transporter YSL3 (YSL3), found in Oryza sativa subsp. japonica (Rice).